The chain runs to 644 residues: MANNDNKHRRSMSMLLYIAVAIFVYLLLSNTLLPGLLRQQIQTVSYSEFLNKIESNEVTKVDLNTGNRNIRFTTGSGDSEKIFETTQFPNDSTLVQTLREHKVDFSASIPDNSANMLMYALIQYGIPLIIFLGIGFFINRSLKRAMGDDGPSMNFGGGFGGLGGNLGRSSAKEIKGEDTGITFKDVAGQEEAKESMQEIVSFLKTPDKYKEIGARCPRGALLVGPPGTGKTLIAKAVAGEAGVPFFQIAGSEFVEMFVGRGAAKVRDLFKQANEKAPCIIFIDEIDAVGKRRDASLNSNDEREQTLNQLLSEMDGFDNHKGIVVLAATNRPETLDKALLRPGRFDRRIPVELPDLKGREAVLQIHANDVKMEPGVDLSIVAKSTPGASGADLANIINEAALRAVRFGRRRVTTEDLTESVDVVIAGAKKKNSVLSEHEKDVVAYHETGHAIVGAIQKNDAPVTKITIVPRTSGALGFTMQVEDDERYLMSKSQAMDEIAVLCGGRAAEELIFGEMTNGASNDIERATAIARAMVTQYGMSDKLGMVTLSQQQSRYLGGGSSLTCSEATAEEIDAEVRRIVEEGHQRALQTLKENRFKLHEIAHYLQKKETITGEEFMNILKRENTFAPVDKNINDEGSSTPSEE.

Residues 1 to 13 lie on the Cytoplasmic side of the membrane; sequence MANNDNKHRRSMS. Residues 14 to 34 traverse the membrane as a helical segment; sequence MLLYIAVAIFVYLLLSNTLLP. Residues 35-117 are Extracellular-facing; the sequence is GLLRQQIQTV…SIPDNSANML (83 aa). The chain crosses the membrane as a helical span at residues 118 to 138; it reads MYALIQYGIPLIIFLGIGFFI. Residues 139–644 lie on the Cytoplasmic side of the membrane; sequence NRSLKRAMGD…DEGSSTPSEE (506 aa). 224-231 is an ATP binding site; it reads GPPGTGKT. Zn(2+) is bound at residue histidine 445. The active site involves glutamate 446. Residues histidine 449 and aspartate 522 each coordinate Zn(2+).

In the central section; belongs to the AAA ATPase family. It in the C-terminal section; belongs to the peptidase M41 family. As to quaternary structure, homohexamer. It depends on Zn(2+) as a cofactor.

It is found in the cell membrane. In terms of biological role, acts as a processive, ATP-dependent zinc metallopeptidase for both cytoplasmic and membrane proteins. Plays a role in the quality control of integral membrane proteins. This chain is ATP-dependent zinc metalloprotease FtsH, found in Lancefieldella parvula (strain ATCC 33793 / DSM 20469 / CCUG 32760 / JCM 10300 / KCTC 3663 / VPI 0546 / 1246) (Atopobium parvulum).